The following is a 127-amino-acid chain: uncharacterized protein (127 aa).

The chain crosses the membrane as a helical span at residues 85–107 (VYLGKIGFVLLHVFYLSCIAYYD).

It localises to the mitochondrion membrane. This is an uncharacterized protein from Dictyostelium discoideum (Social amoeba).